The following is a 222-amino-acid chain: MSDQNLGQGSDEPEREEPIVRDKRRIDPETGKVREPQDLSHEELVDVGPAGESQGEEILSDDDLDLLSGQTTADQLAADQLAADQLAAERLADLQRVTAEYANYRKRTESNREIERERAIGDAVKGLIPVLDDLERADTHGDLIEGSAFATIAAKLRASVERLGLLPYGEKGEPFDPQIHEAIFQQPTPGVTADTVADVVETGYRLGSTTVRVAKVVVAVPA.

The disordered stretch occupies residues 1 to 64 (MSDQNLGQGS…GEEILSDDDL (64 aa)). Over residues 16–44 (EEPIVRDKRRIDPETGKVREPQDLSHEEL) the composition is skewed to basic and acidic residues. The span at 54 to 64 (QGEEILSDDDL) shows a compositional bias: acidic residues.

The protein belongs to the GrpE family. In terms of assembly, homodimer.

The protein localises to the cytoplasm. Its function is as follows. Participates actively in the response to hyperosmotic and heat shock by preventing the aggregation of stress-denatured proteins, in association with DnaK and GrpE. It is the nucleotide exchange factor for DnaK and may function as a thermosensor. Unfolded proteins bind initially to DnaJ; upon interaction with the DnaJ-bound protein, DnaK hydrolyzes its bound ATP, resulting in the formation of a stable complex. GrpE releases ADP from DnaK; ATP binding to DnaK triggers the release of the substrate protein, thus completing the reaction cycle. Several rounds of ATP-dependent interactions between DnaJ, DnaK and GrpE are required for fully efficient folding. This chain is Protein GrpE, found in Leifsonia xyli subsp. xyli (strain CTCB07).